Reading from the N-terminus, the 218-residue chain is MLKKIIILFLGIFLLSSCTDNFRNYFQRSANNKLFDVKGAKGGKRKPVYNNKYIALAKKNIVEDNIDYDNDVDDNYDNDGPLISEKIDNVKRNREMYLNMIKSDIARQKAEFSATQSNNVMTLSKANKKVRKDDSYKEKKIEEELNQIKAMLKETKRDITKYTCPNATVNQNYVPPVTNYEHVNYPPIKNSNPYNNTSKVKQKFIREDDDDTNNACSI.

The signal sequence occupies residues 1 to 17; that stretch reads MLKKIIILFLGIFLLSS. Residue Cys-18 is the site of N-palmitoyl cysteine attachment. Residue Cys-18 is the site of S-diacylglycerol cysteine attachment. Residues 136–164 adopt a coiled-coil conformation; it reads YKEKKIEEELNQIKAMLKETKRDITKYTC.

It is found in the cell membrane. This is an uncharacterized protein from Rickettsia typhi (strain ATCC VR-144 / Wilmington).